A 390-amino-acid polypeptide reads, in one-letter code: tRNA-specific 2-thiouridylase MnmA (390 aa).

ATP is bound by residues 33-40 and Met-59; that span reads AMSGGVDS. Residue Cys-131 is the Nucleophile of the active site. Cys-131 and Cys-230 are disulfide-bonded. Gly-155 contributes to the ATP binding site. An interaction with tRNA region spans residues 180–182; the sequence is KDQ. The active-site Cysteine persulfide intermediate is Cys-230.

It belongs to the MnmA/TRMU family.

The protein resides in the cytoplasm. It carries out the reaction S-sulfanyl-L-cysteinyl-[protein] + uridine(34) in tRNA + AH2 + ATP = 2-thiouridine(34) in tRNA + L-cysteinyl-[protein] + A + AMP + diphosphate + H(+). Catalyzes the 2-thiolation of uridine at the wobble position (U34) of tRNA, leading to the formation of s(2)U34. The polypeptide is tRNA-specific 2-thiouridylase MnmA (Symbiobacterium thermophilum (strain DSM 24528 / JCM 14929 / IAM 14863 / T)).